We begin with the raw amino-acid sequence, 380 residues long: Cytochrome b (380 aa).

The next 4 membrane-spanning stretches (helical) occupy residues 33-53 (SGSL…FLAM), 77-98 (WLIR…YLHV), 113-133 (WNIG…GYVL), and 178-198 (FFAF…IHLL). Residues His-83 and His-97 each coordinate heme b. Residues His-182 and His-196 each contribute to the heme b site. His-201 lines the a ubiquinone pocket. The next 4 helical transmembrane spans lie at 226–246 (YKDL…ALFS), 288–308 (LGGV…PILH), 320–340 (LSQI…WIGG), and 347–367 (FVLI…IALP).

Belongs to the cytochrome b family. In terms of assembly, the cytochrome bc1 complex contains 3 respiratory subunits (MT-CYB, CYC1 and UQCRFS1), 2 core proteins (UQCRC1 and UQCRC2) and probably 6 low-molecular weight proteins. The cofactor is heme b.

It localises to the mitochondrion inner membrane. In terms of biological role, component of the ubiquinol-cytochrome c reductase complex (complex III or cytochrome b-c1 complex) that is part of the mitochondrial respiratory chain. The b-c1 complex mediates electron transfer from ubiquinol to cytochrome c. Contributes to the generation of a proton gradient across the mitochondrial membrane that is then used for ATP synthesis. This chain is Cytochrome b (mt-cyb), found in Polyodon spathula (North American paddlefish).